The chain runs to 814 residues: Dimethyl sulfoxide reductase DmsA (814 aa).

Positions 1 to 45 (MKTKIPDAVLAAEVSRRGLVKTTAIGGLAMASSALTLPFSRIAHA) form a signal peptide, tat-type signal. The 4Fe-4S Mo/W bis-MGD-type domain maps to 56–118 (EKVIWSACTV…SMRRRVYNPD (63 aa)). Residues cysteine 63, cysteine 67, cysteine 71, and cysteine 104 each coordinate [4Fe-4S] cluster. Residues 172 to 176 (LGGTM), serine 205, 244 to 245 (ET), 270 to 271 (ID), 291 to 293 (GTD), 386 to 387 (WG), arginine 390, asparagine 488, 512 to 513 (ID), histidine 701, 707 to 709 (HST), asparagine 788, and 804 to 805 (SH) contribute to the Mo-bis(molybdopterin guanine dinucleotide) site.

This sequence belongs to the prokaryotic molybdopterin-containing oxidoreductase family. In terms of assembly, heterotrimeric enzyme composed of a catalytic heterodimer (DmsAB) and a membrane anchor protein (DmsC). [4Fe-4S] cluster is required as a cofactor. Mo-bis(molybdopterin guanine dinucleotide) serves as cofactor. In terms of processing, exported by the Tat system. The position of the signal peptide cleavage has been experimentally proven. Can also be exported by the Sec system.

The protein resides in the cell membrane. The catalysed reaction is dimethyl sulfide + a menaquinone + H2O = dimethyl sulfoxide + a menaquinol. Inhibited by dithionite, sodium hydrogensulfite and tungstate. Its function is as follows. Catalyzes the reduction of dimethyl sulfoxide (DMSO) to dimethyl sulfide (DMS). DMSO reductase serves as the terminal reductase under anaerobic conditions, with DMSO being the terminal electron acceptor. Terminal reductase during anaerobic growth on various sulfoxides and N-oxide compounds. Allows E.coli to grow anaerobically on DMSO as respiratory oxidant. The protein is Dimethyl sulfoxide reductase DmsA (dmsA) of Escherichia coli (strain K12).